Reading from the N-terminus, the 235-residue chain is Small ribosomal subunit protein uS2 (235 aa).

It belongs to the universal ribosomal protein uS2 family.

This Thermoanaerobacter pseudethanolicus (strain ATCC 33223 / 39E) (Clostridium thermohydrosulfuricum) protein is Small ribosomal subunit protein uS2.